The following is a 417-amino-acid chain: Probable tubulin polyglutamylase ttll-9 (417 aa).

The TTL domain maps to 23–372 (QRKKKILFKC…EKKLIGNENE (350 aa)). ATP is bound by residues 188–191 (QCYV), Lys-201, and Asp-203.

It belongs to the tubulin--tyrosine ligase family. Expressed in head sensory neurons.

Polyglutamylase that forms polyglutamate side chains on tubulin. Acts when complexed with other proteins. Appears to be dispensable for polar spindle formation in dividing embryonic cells, for cilia-dependent osmotic avoidance and for male mating behavior. Probably by regulating microtubule stability via the glutamylation of tubulin, regulates PLM axon developmental growth. The protein is Probable tubulin polyglutamylase ttll-9 of Caenorhabditis elegans.